A 959-amino-acid chain; its full sequence is Glycine dehydrogenase (decarboxylating) (959 aa).

At lysine 708 the chain carries N6-(pyridoxal phosphate)lysine.

The protein belongs to the GcvP family. As to quaternary structure, the glycine cleavage system is composed of four proteins: P, T, L and H. It depends on pyridoxal 5'-phosphate as a cofactor.

It catalyses the reaction N(6)-[(R)-lipoyl]-L-lysyl-[glycine-cleavage complex H protein] + glycine + H(+) = N(6)-[(R)-S(8)-aminomethyldihydrolipoyl]-L-lysyl-[glycine-cleavage complex H protein] + CO2. The glycine cleavage system catalyzes the degradation of glycine. The P protein binds the alpha-amino group of glycine through its pyridoxal phosphate cofactor; CO(2) is released and the remaining methylamine moiety is then transferred to the lipoamide cofactor of the H protein. In Serratia proteamaculans (strain 568), this protein is Glycine dehydrogenase (decarboxylating).